The sequence spans 891 residues: Alanine--tRNA ligase (891 aa).

Positions 564, 568, 681, and 685 each coordinate Zn(2+).

It belongs to the class-II aminoacyl-tRNA synthetase family. Zn(2+) serves as cofactor.

The protein localises to the cytoplasm. The enzyme catalyses tRNA(Ala) + L-alanine + ATP = L-alanyl-tRNA(Ala) + AMP + diphosphate. Catalyzes the attachment of alanine to tRNA(Ala) in a two-step reaction: alanine is first activated by ATP to form Ala-AMP and then transferred to the acceptor end of tRNA(Ala). Also edits incorrectly charged Ser-tRNA(Ala) and Gly-tRNA(Ala) via its editing domain. The protein is Alanine--tRNA ligase of Methylorubrum extorquens (strain PA1) (Methylobacterium extorquens).